We begin with the raw amino-acid sequence, 214 residues long: Probable GTP-binding protein EngB (214 aa).

Residues 25–203 form the EngB-type G domain; that stretch reads EGAEVAFAGR…EQVITGWLNL (179 aa). Residues 33-40, 60-64, 80-83, 147-150, and 182-184 each bind GTP; these read GRSNAGKS, GRTQL, DLPG, TKSD, and FSS. Residues serine 40 and threonine 62 each coordinate Mg(2+).

It belongs to the TRAFAC class TrmE-Era-EngA-EngB-Septin-like GTPase superfamily. EngB GTPase family. It depends on Mg(2+) as a cofactor.

In terms of biological role, necessary for normal cell division and for the maintenance of normal septation. In Teredinibacter turnerae (strain ATCC 39867 / T7901), this protein is Probable GTP-binding protein EngB.